The sequence spans 3123 residues: Protein bark beetle (3123 aa).

The first 34 residues, 1–34 (MKLQHHKTNRQRISKPHRDPKWASICLWLLVTLA), serve as a signal peptide directing secretion. Residues 35–2714 (FSTHLARSQE…IIDPLSWRAD (2680 aa)) are Extracellular-facing. The segment at 83-104 (DVTVAPQGSTPSMTSSSSYTEL) is disordered. The span at 91–102 (STPSMTSSSSYT) shows a compositional bias: low complexity. Residues 191 to 295 (IRLVDGPTPV…YHNDLGIQCL (105 aa)) form the SRCR 1 domain. Disulfide bonds link C216–C284, C231–C294, and C262–C272. N221 carries N-linked (GlcNAc...) asparagine glycosylation. 3 PbH1 repeats span residues 358–380 (GLPPQMEHVVISHSAYTGFNSTR), 382–404 (WAGFQLQNVTVRKCNGIGVFVNS), and 406–428 (QGAVQLDGCSIVDNAGDGIKYVG). N-linked (GlcNAc...) asparagine glycosylation is found at N377, N389, and N403. Residues C446 and C474 are joined by a disulfide bond. In terms of domain architecture, CUB spans 446–559 (CTLPTTSGQT…NGFFRMTSGD (114 aa)). 2 N-linked (GlcNAc...) asparagine glycosylation sites follow: N498 and N523. PbH1 repeat units lie at residues 562–584 (AYDLKVSQSTVEDNGGRGVAIDN), 586–609 (RSKLHVHSSSVSGNGHVAGVHVTS), and 611–633 (AGDVNITSSNISFNNGAGVNITY). N-linked (GlcNAc...) asparagine glycosylation is found at N615, N620, N630, N639, N658, N672, N702, and N709. 2 PbH1 repeats span residues 756-778 (NLQGRIEYNMFRFGSYGCLFINN) and 789-809 (PVKLIIQSNYFMRNSGVHVVS). N-linked (GlcNAc...) asparagine glycans are attached at residues N834, N900, and N1040. Residues 1071 to 1175 (VRLVGGAGAN…HENDVGLRCY (105 aa)) enclose the SRCR 2 domain. 3 cysteine pairs are disulfide-bonded: C1096-C1164, C1109-C1174, and C1144-C1154. PbH1 repeat units lie at residues 1219–1241 (HARHNLENVRIVNNLQDGLGIIY) and 1248–1270 (KSVNNIKNSEFSGNKGSGISLKQ). N-linked (GlcNAc...) asparagine glycosylation is present at N1375. PbH1 repeat units lie at residues 1451-1475 (VPTLTIRSTKIQKNLRGITGIYYNR) and 1489-1511 (NESIKLINSELSYNEREAILIRS). 3 N-linked (GlcNAc...) asparagine glycosylation sites follow: N1489, N1520, and N1529. The stretch at 1553 to 1575 (LFHYVIQDTTFEQNTHGGFQVSL) is one PbH1 13 repeat. Residues N1584, N1593, and N1614 are each glycosylated (N-linked (GlcNAc...) asparagine). The stretch at 1722-1744 (LYRNLIAENEMDYNLVAGVRSAR) is one PbH1 14 repeat. Residues N1883, N1920, and N1940 are each glycosylated (N-linked (GlcNAc...) asparagine). The 126-residue stretch at 1912-2037 (IRLCTSANNC…DDVFVFVSCN (126 aa)) folds into the SRCR 3 domain. Disulfide bonds link C1950–C2025, C1963–C2036, and C2000–C2010. PbH1 repeat units follow at residues 2104–2126 (HKNPSITSVSIENSANHGINMIA) and 2128–2150 (SGKLNLNHLNINNTLGTGISIVS). N2139, N2231, N2251, N2314, and N2357 each carry an N-linked (GlcNAc...) asparagine glycan. PbH1 repeat units follow at residues 2337–2361 (TPTLTLIGNRIEKNCRQLYGNFSTC), 2372–2393 (MNSLYFMNNLITENQGGLRIRA), and 2401–2424 (SLRGFVHHNLFMRNRNRPALYVEG). N-linked (GlcNAc...) asparagine glycans are attached at residues N2459, N2536, N2546, N2566, N2596, and N2636. The chain crosses the membrane as a helical span at residues 2715 to 2735 (IFAISIISAFVLAIILLILVA). The Cytoplasmic portion of the chain corresponds to 2736 to 3123 (FCWFAKSKHR…SHSQPLETAM (388 aa)). Disordered regions lie at residues 2766-2789 (IDPQGSLRRRPNYNMSSNGTLSKG), 2961-2983 (YQRSSHSSFMPHRSSGDSLPFDQ), 2996-3015 (LYRPAPAVPSSQQATPADMR), and 3025-3123 (RSSK…ETAM). Residues 2778 to 2788 (YNMSSNGTLSK) are compositionally biased toward polar residues. The segment covering 2964–2973 (SSHSSFMPHR) has biased composition (low complexity). Low complexity-rich tracts occupy residues 3047–3057 (PNVAPAGGPAQ) and 3068–3078 (SEESSPTTPSP). Over residues 3107–3123 (PLQTNGRSHSQPLETAM) the composition is skewed to polar residues.

In terms of processing, N-glycosylated. Post-translationally, may be proteolytically cleaved in the extracellular domain. As to expression, expression detected in embryonic epithelia and central nervous system (at protein level). First detected during stage 13 in the tracheal system, the foregut, the hindgut, the salivary glands and the epidermis. Expression persists in these tissues until the end of embryogenesis. Expression in epithelia declines from late stage 15 and expression appears in the central nervous system during stage 16.

It localises to the cell membrane. Its subcellular location is the cell junction. It is found in the septate junction. The protein resides in the adherens junction. Required for the maturation but not the establishment of septate junctions in developing epithelial cells and is involved in epithelial cell adhesion during septate junction maturation. Plays a role in the proper localization of the septate junction core components pck/mega, kune, Nrx-IV and Nrg during late embryogenesis. Involved in the formation of tricellular junctions which mediate cell contact where three epithelial cells meet but not of bicellular junctions. Required for the accumulation of Gli at tricellular junctions. This chain is Protein bark beetle, found in Drosophila melanogaster (Fruit fly).